Reading from the N-terminus, the 315-residue chain is Aspartate carbamoyltransferase catalytic subunit (315 aa).

Residues Arg-55 and Thr-56 each contribute to the carbamoyl phosphate site. Lys-83 is an L-aspartate binding site. Residues Arg-105, His-138, and Gln-141 each contribute to the carbamoyl phosphate site. L-aspartate-binding residues include Arg-171 and Arg-225. Positions 266 and 267 each coordinate carbamoyl phosphate.

This sequence belongs to the aspartate/ornithine carbamoyltransferase superfamily. ATCase family. In terms of assembly, heterododecamer (2C3:3R2) of six catalytic PyrB chains organized as two trimers (C3), and six regulatory PyrI chains organized as three dimers (R2).

The catalysed reaction is carbamoyl phosphate + L-aspartate = N-carbamoyl-L-aspartate + phosphate + H(+). Its pathway is pyrimidine metabolism; UMP biosynthesis via de novo pathway; (S)-dihydroorotate from bicarbonate: step 2/3. Functionally, catalyzes the condensation of carbamoyl phosphate and aspartate to form carbamoyl aspartate and inorganic phosphate, the committed step in the de novo pyrimidine nucleotide biosynthesis pathway. This is Aspartate carbamoyltransferase catalytic subunit from Mycolicibacterium gilvum (strain PYR-GCK) (Mycobacterium gilvum (strain PYR-GCK)).